Here is a 622-residue protein sequence, read N- to C-terminus: Low affinity potassium transport system protein Kup (622 aa).

A run of 12 helical transmembrane segments spans residues 9 to 29 (LPAVTLAAIGVVYGDIGTSPL), 52 to 72 (FLSLIFWLLILIVSLKYLLFV), 99 to 119 (TPVLVIIGLIGGSFFYGEVVI), 137 to 157 (PSLQEFIVPLSVVVLTLLFFI), 165 to 185 (VGKLFAPVMLLWFLTLGVLGV), 213 to 233 (VSFFALGAVVLAITGVEALYA), 247 to 267 (WFSAVLPSLVLNYFGQGALLL), 276 to 296 (PFFLLAPDWAMIPLLILATLA), 337 to 357 (IYIPFINWLLYIAVVLVIVSF), 363 to 383 (LAAAYGIAVTGTMVLTSILSC), 394 to 414 (LLIVSVLLLALLCLDVSMFAA), and 419 to 439 (IFSGGWLPLLLGFLMFIAMIT).

The protein belongs to the HAK/KUP transporter (TC 2.A.72) family.

The protein resides in the cell inner membrane. The catalysed reaction is K(+)(in) + H(+)(in) = K(+)(out) + H(+)(out). Its function is as follows. Responsible for the low-affinity transport of potassium into the cell. Likely operates as a K(+):H(+) symporter. The sequence is that of Low affinity potassium transport system protein Kup from Sodalis glossinidius (strain morsitans).